A 1193-amino-acid chain; its full sequence is Pyruvate carboxylase (1193 aa).

The region spanning 41 to 493 is the Biotin carboxylation domain; that stretch reads QFQKILVANR…WTTFIDDTTE (453 aa). Positions 159, 243, and 278 each coordinate ATP. The region spanning 163–360 is the ATP-grasp domain; the sequence is RQLAIRCNVP…IVAAQIQIAA (198 aa). The active site involves Arg335. In terms of domain architecture, Pyruvate carboxyltransferase spans 579-847; sequence CLIMDTTWRD…DPGLNSAHVR (269 aa). Residues 587–591 and Arg660 each bind substrate; that span reads RDAHQ. Asp588 is a binding site for a divalent metal cation. A divalent metal cation-binding residues include Lys756, His786, and His788. An N6-carboxylysine modification is found at Lys756. Position 921 (Thr921) interacts with substrate. A Biotinyl-binding domain is found at 1116–1191; the sequence is KADVGDSSQV…DGQDLVCKIT (76 aa). An N6-biotinyllysine modification is found at Lys1157.

Biotin serves as cofactor. The cofactor is Zn(2+).

The protein localises to the cytoplasm. It catalyses the reaction hydrogencarbonate + pyruvate + ATP = oxaloacetate + ADP + phosphate + H(+). It participates in carbohydrate biosynthesis; gluconeogenesis. Pyruvate carboxylase catalyzes a 2-step reaction, involving the ATP-dependent carboxylation of the covalently attached biotin in the first step and the transfer of the carboxyl group to pyruvate in the second. This Aspergillus terreus (strain NIH 2624 / FGSC A1156) protein is Pyruvate carboxylase (pyc).